We begin with the raw amino-acid sequence, 374 residues long: tRNA (guanine(26)-N(2))-dimethyltransferase (374 aa).

The Trm1 methyltransferase domain occupies 4 to 371; the sequence is IEIREGKASL…KEIDEIVNCI (368 aa). Residues Arg44, Arg69, Asp87, Asp113, and Ala114 each contribute to the S-adenosyl-L-methionine site. Cys244, Cys247, Cys261, and Cys264 together coordinate Zn(2+).

It belongs to the class I-like SAM-binding methyltransferase superfamily. Trm1 family.

The enzyme catalyses guanosine(26) in tRNA + 2 S-adenosyl-L-methionine = N(2)-dimethylguanosine(26) in tRNA + 2 S-adenosyl-L-homocysteine + 2 H(+). Functionally, dimethylates a single guanine residue at position 26 of a number of tRNAs using S-adenosyl-L-methionine as donor of the methyl groups. The polypeptide is tRNA (guanine(26)-N(2))-dimethyltransferase (Sulfurisphaera tokodaii (strain DSM 16993 / JCM 10545 / NBRC 100140 / 7) (Sulfolobus tokodaii)).